Here is a 442-residue protein sequence, read N- to C-terminus: Putative toxin YopC (442 aa).

In the C-terminal section; belongs to the MbcT/ParT/Res family. In terms of assembly, forms a complex with cognate antitoxin YopB.

Its function is as follows. May be the toxic component of a type II toxin-antitoxin (TA) system. Neutralized by its cognate antitoxin YopB. This Bacillus subtilis (strain 168) protein is Putative toxin YopC (yopC).